A 619-amino-acid polypeptide reads, in one-letter code: UvrABC system protein C (619 aa).

One can recognise a GIY-YIG domain in the interval 20-98 (TAPGVYRMYA…IKSLSPRYNV (79 aa)). Residues 207-242 (DQLGEEIMHSMQQASEALEFERAARLRDLLSSLRSM) form the UVR domain.

It belongs to the UvrC family. As to quaternary structure, interacts with UvrB in an incision complex.

It is found in the cytoplasm. Its function is as follows. The UvrABC repair system catalyzes the recognition and processing of DNA lesions. UvrC both incises the 5' and 3' sides of the lesion. The N-terminal half is responsible for the 3' incision and the C-terminal half is responsible for the 5' incision. This is UvrABC system protein C from Xanthomonas euvesicatoria pv. vesicatoria (strain 85-10) (Xanthomonas campestris pv. vesicatoria).